Reading from the N-terminus, the 232-residue chain is Ion-translocating oxidoreductase complex subunit E (232 aa).

The next 6 membrane-spanning stretches (helical) occupy residues 18-38, 39-59, 69-89, 93-113, 127-147, and 182-202; these read GLVQLLGLCPLLAVTATLTNA, IGLGLATLVVLVGSNVLVSLV, IPVFVMIIAALVTCVQLLINA, GLYLSLGIFLPLIVTNCVIIG, AAFDGLMMGLGFTLVLMLLGA, and NFLLAMLPPGAFIAMGFLIAI.

Belongs to the NqrDE/RnfAE family. The complex is composed of six subunits: RnfA, RnfB, RnfC, RnfD, RnfE and RnfG.

The protein resides in the cell inner membrane. In terms of biological role, part of a membrane-bound complex that couples electron transfer with translocation of ions across the membrane. The chain is Ion-translocating oxidoreductase complex subunit E from Shewanella loihica (strain ATCC BAA-1088 / PV-4).